The chain runs to 295 residues: GTPase Era (295 aa).

One can recognise an Era-type G domain in the interval 5–172 (YCGYAAIIGR…EQAVHQLMPE (168 aa)). The G1 stretch occupies residues 13-20 (GRPNVGKS). A GTP-binding site is contributed by 13–20 (GRPNVGKS). A G2 region spans residues 39 to 43 (QTTRY). The segment at 60–63 (DTPG) is G3. GTP contacts are provided by residues 60 to 64 (DTPGL) and 121 to 124 (NKVD). A G4 region spans residues 121-124 (NKVD). The G5 stretch occupies residues 151–153 (LSA). In terms of domain architecture, KH type-2 spans 203–279 (LGQEIPYSLA…FLQLWVKVKS (77 aa)).

Belongs to the TRAFAC class TrmE-Era-EngA-EngB-Septin-like GTPase superfamily. Era GTPase family. As to quaternary structure, monomer.

Its subcellular location is the cytoplasm. It is found in the cell inner membrane. In terms of biological role, an essential GTPase that binds both GDP and GTP, with rapid nucleotide exchange. Plays a role in 16S rRNA processing and 30S ribosomal subunit biogenesis and possibly also in cell cycle regulation and energy metabolism. This Coxiella burnetii (strain CbuG_Q212) (Coxiella burnetii (strain Q212)) protein is GTPase Era.